A 371-amino-acid polypeptide reads, in one-letter code: UDP-N-acetylglucosamine--N-acetylmuramyl-(pentapeptide) pyrophosphoryl-undecaprenol N-acetylglucosamine transferase (371 aa).

UDP-N-acetyl-alpha-D-glucosamine-binding positions include 15-17 (TGG), Asn126, Arg169, Ser197, and Gln298.

It belongs to the glycosyltransferase 28 family. MurG subfamily.

The protein localises to the cell inner membrane. The enzyme catalyses di-trans,octa-cis-undecaprenyl diphospho-N-acetyl-alpha-D-muramoyl-L-alanyl-D-glutamyl-meso-2,6-diaminopimeloyl-D-alanyl-D-alanine + UDP-N-acetyl-alpha-D-glucosamine = di-trans,octa-cis-undecaprenyl diphospho-[N-acetyl-alpha-D-glucosaminyl-(1-&gt;4)]-N-acetyl-alpha-D-muramoyl-L-alanyl-D-glutamyl-meso-2,6-diaminopimeloyl-D-alanyl-D-alanine + UDP + H(+). Its pathway is cell wall biogenesis; peptidoglycan biosynthesis. Cell wall formation. Catalyzes the transfer of a GlcNAc subunit on undecaprenyl-pyrophosphoryl-MurNAc-pentapeptide (lipid intermediate I) to form undecaprenyl-pyrophosphoryl-MurNAc-(pentapeptide)GlcNAc (lipid intermediate II). This Paramagnetospirillum magneticum (strain ATCC 700264 / AMB-1) (Magnetospirillum magneticum) protein is UDP-N-acetylglucosamine--N-acetylmuramyl-(pentapeptide) pyrophosphoryl-undecaprenol N-acetylglucosamine transferase.